Here is a 120-residue protein sequence, read N- to C-terminus: Large ribosomal subunit protein eL8 (120 aa).

This sequence belongs to the eukaryotic ribosomal protein eL8 family. In terms of assembly, part of the 50S ribosomal subunit. Probably part of the RNase P complex.

Its subcellular location is the cytoplasm. Functionally, multifunctional RNA-binding protein that recognizes the K-turn motif in ribosomal RNA, the RNA component of RNase P, box H/ACA, box C/D and box C'/D' sRNAs. This Methanosarcina mazei (strain ATCC BAA-159 / DSM 3647 / Goe1 / Go1 / JCM 11833 / OCM 88) (Methanosarcina frisia) protein is Large ribosomal subunit protein eL8.